A 1131-amino-acid polypeptide reads, in one-letter code: DNA polymerase II large subunit (1131 aa).

This sequence belongs to the archaeal DNA polymerase II family. As to quaternary structure, heterodimer of a large subunit and a small subunit.

The catalysed reaction is DNA(n) + a 2'-deoxyribonucleoside 5'-triphosphate = DNA(n+1) + diphosphate. It catalyses the reaction Exonucleolytic cleavage in the 3'- to 5'-direction to yield nucleoside 5'-phosphates.. Functionally, possesses two activities: a DNA synthesis (polymerase) and an exonucleolytic activity that degrades single-stranded DNA in the 3'- to 5'-direction. Has a template-primer preference which is characteristic of a replicative DNA polymerase. The protein is DNA polymerase II large subunit of Methanococcus maripaludis (strain C7 / ATCC BAA-1331).